A 596-amino-acid polypeptide reads, in one-letter code: Elongation factor 4 (596 aa).

One can recognise a tr-type G domain in the interval 2–183; the sequence is KNIRNFSIIA…TIITKIPAPK (182 aa). GTP-binding positions include 14 to 19 and 130 to 133; these read DHGKST and NKID.

This sequence belongs to the TRAFAC class translation factor GTPase superfamily. Classic translation factor GTPase family. LepA subfamily.

Its subcellular location is the cell inner membrane. It carries out the reaction GTP + H2O = GDP + phosphate + H(+). Required for accurate and efficient protein synthesis under certain stress conditions. May act as a fidelity factor of the translation reaction, by catalyzing a one-codon backward translocation of tRNAs on improperly translocated ribosomes. Back-translocation proceeds from a post-translocation (POST) complex to a pre-translocation (PRE) complex, thus giving elongation factor G a second chance to translocate the tRNAs correctly. Binds to ribosomes in a GTP-dependent manner. This Campylobacter lari (strain RM2100 / D67 / ATCC BAA-1060) protein is Elongation factor 4.